Reading from the N-terminus, the 452-residue chain is Glutamyl-tRNA(Gln) amidotransferase subunit A (452 aa).

Residues lysine 56 and serine 131 each act as charge relay system in the active site. Serine 155 acts as the Acyl-ester intermediate in catalysis.

This sequence belongs to the amidase family. GatA subfamily. As to quaternary structure, heterotrimer of A, B and C subunits.

The catalysed reaction is L-glutamyl-tRNA(Gln) + L-glutamine + ATP + H2O = L-glutaminyl-tRNA(Gln) + L-glutamate + ADP + phosphate + H(+). Its function is as follows. Allows the formation of correctly charged Gln-tRNA(Gln) through the transamidation of misacylated Glu-tRNA(Gln) in organisms which lack glutaminyl-tRNA synthetase. The reaction takes place in the presence of glutamine and ATP through an activated gamma-phospho-Glu-tRNA(Gln). The polypeptide is Glutamyl-tRNA(Gln) amidotransferase subunit A (Campylobacter concisus (strain 13826)).